Here is a 155-residue protein sequence, read N- to C-terminus: Putative methyl-CpG-binding domain protein 12 (155 aa).

The CW-type zinc-finger motif lies at 1–53 (MVQCTDCKKWRLIPSMQHYNIIKETQLQTPFVCGTTSGWTPNMSCNVPQDGTT). The MBD-associated domain (MAD) signature appears at 3–45 (QCTDCKKWRLIPSMQHYNIIKETQLQTPFVCGTTSGWTPNMSC). Residues Cys-4, Cys-7, Cys-33, and Cys-45 each contribute to the Zn(2+) site. In terms of domain architecture, MBD spans 53 to 126 (TCDTWPSIPP…SQFSFQIPKP (74 aa)). Residues 130-155 (NYVKKRTRPVKRRKSSKDNNCEKGKK) are disordered. Residues 133-144 (KKRTRPVKRRKS) show a composition bias toward basic residues. Positions 140 to 147 (KRRKSSKD) match the Nuclear localization signal motif. Residues 145–155 (SKDNNCEKGKK) show a composition bias toward basic and acidic residues.

It is found in the nucleus. In terms of biological role, probable transcriptional regulator. The sequence is that of Putative methyl-CpG-binding domain protein 12 (MBD12) from Arabidopsis thaliana (Mouse-ear cress).